A 1905-amino-acid polypeptide reads, in one-letter code: METLNGPAGGGAPDAKLQPPGQHHRHHHLHPVAERRRLHRAPSPARPFLKDLHARPAAPGPAVPSSGRAPAPAAPRSPNLAGKAPPSPGSLAAPGRLSRRSGGVPGAKDKPPPGAGARAAGGAKAALGSRRAARVAPAEPLSRAGKPPGAEPPSAAAKGRKAKRGSRAPPARTVGPPTPAARIPAVTLAVTSVAGSPARCSRISHTDSSSDLSDCPSEPLSDEQRLLPAASSDAESGTGSSDREPPRGAPTPSPAARGAPPGSPEPPALLAAPLAAGACPGGRSIPSGVSGGFAGPGVAEDVRGRSPPERPVPGTPKEPSLGEQSRLVPAAEEEELLREMEELRSENDYLKDELDELRAEMEEMRDSYLEEDVYQLQELRRELDRANKNCRILQYRLRKAEQKSLKVAETGQVDGELIRSLEQDLKVAKDVSVRLHHELKTVEEKRAKAEDENETLRQQMIEVEISKQALQNELERLKESSLKRRSTREMYKEKKTFNQDDSADLRCQLQFAKEEAFLMRKKMAKLGREKDELEQELQKYKSLYGDVDSPLPTGEAGGPPSTREAELKLRLKLVEEEANILGRKIVELEVENRGLKAEMEDMRGQQEREGPGRDHAPSIPTSPFGDSLESSTELRRHLQFVEEEAELLRRSISEIEDHNRQLTHELSKFKFEPPREPGWLGEGASPGAGGGAPLQEELKSARLQISELSGKVLKLQHENHALLSNIQRCDLAAHLGLRAPSPRDSDAESDAGKKESDGEESRLPQPKREGPVGGESDSEEMFEKTSGFGSGKPSEASEPCPTELLKAREDSEYLVTLKHEAQRLERTVERLITDTDSFLHDAGLRGGAPLPGPGLQGEEEQGEGDQQEPQLLGTINAKMKAFKKELQAFLEQVNRIGDGLSPLPHLTESSSFLSTVTSVSRDSPIGNLGKELGPDLQSRLKEQLEWQLGPARGDERESLRLRAARELHRRADGDTGSHGLGGQTCFSLEMEEEHLYALRWKELEMHSLALQNTLHERTWSDEKNLMQQELRSLKQNIFLFYVKLRWLLKHWRQGKQMEEEGEEFTEGEHPETLSRLGELGVQGGHQADGPDHDSDRGCGFPVGEHSPHSRVQIGDHSLRLQTADRGQPHKQVVENQQLFSAFKALLEDFRAELREDERARLRLQQQYASDKAAWDVEWAVLKCRLEQLEEKTENKLGELGSSAESKGALKKEREVHQKLLADSHSLVMDLRWQIHHSEKNWNREKVELLDRLDRDRQEWERQKKEFLWRIEQLQKENSPRRGGSFLCDQKDGNVRPFPHQGSLRMPRPVAMWPCADADSIPFEDRPLSKLKESDRCSASENLYLDALSLDDEPEEPPAHRPEREFRNRLPEEEENHKGNLQRAVSVSSMSEFQRLMDISPFLPEKGLPSTSSKEDVTPPLSPDDLKYIEEFNKSWDYTPNRGHNGGGPDLWADRTEVGRAGHEDSTEPFPDSSWYLTTSVTMTTDTMTSPEHCQKQPLRSHVLTEQSGLRVLHSPPAVRRVDSITAAGGEGPFPTSRARGSPGDTKGGPPEPMLSRWPCTSPRHSRDYVEGARRPLDSPLCTSLGFASPLHSLEMSKNLSDDMKEVAFSVRNAICSGPGELQVKDMACQTNGSRTMGTQTVQTISVGLQTEALRGSGVTSSPHKCLTPKAGGGATPVSSPSRSLRSRQVAPAIEKVQAKFERTCCSPKYGSPKLQRKPLPKADQPNNRTSPGMAQKGYSESAWARSTTTRESPVHTTINDGLSSLFNIIDHSPVVQDPFQKGLRAGSRSRSAEPRPELGPGQETGTNSRGRSPSPIGVGSEMCREEGGEGTPVKQDLSAPPGYTLTENVARILNKKLLEHALKEERRQAAHGPPGLHSDSHSLGDTAEPGPMENQTVLLTAPWGL.

Residues 1–249 are necessary for colocalization and binding with microtubules; that stretch reads METLNGPAGG…SSDREPPRGA (249 aa). Positions 1 to 329 are disordered; sequence METLNGPAGG…SLGEQSRLVP (329 aa). Residues 1-508 are necessary for self-assembly, microtubule bundling activity and apicobasal microtubule organization; it reads METLNGPAGG…QDDSADLRCQ (508 aa). Residues 22 to 40 are compositionally biased toward basic residues; that stretch reads QHHRHHHLHPVAERRRLHR. 2 stretches are compositionally biased toward low complexity: residues 63–95 and 115–130; these read VPSS…AAPG and AGAR…LGSR. Phosphoserine occurs at positions 77 and 87. Phosphoserine is present on residues S217, S221, and S263. Residues 268-283 show a composition bias toward low complexity; the sequence is ALLAAPLAAGACPGGR. 3 coiled-coil regions span residues 330 to 404, 432 to 483, and 513 to 718; these read AAEE…EQKS, SVRL…SSLK, and KEEA…LQHE. Disordered regions lie at residues 544–563, 601–631, 671–694, 737–800, and 842–867; these read YGDV…PSTR, DMRG…LESS, FEPP…GAPL, LRAP…SEPC, and AGLR…GDQQ. S549 carries the post-translational modification Phosphoserine. Positions 601-616 are enriched in basic and acidic residues; it reads DMRGQQEREGPGRDHA. S618 carries the post-translational modification Phosphoserine. Position 621 is a phosphothreonine (T621). Positions 680–692 are enriched in gly residues; the sequence is LGEGASPGAGGGA. S685 carries the post-translational modification Phosphoserine. Over residues 741–770 the composition is skewed to basic and acidic residues; sequence SPRDSDAESDAGKKESDGEESRLPQPKREG. Phosphoserine is present on S776. Over residues 857–866 the composition is skewed to acidic residues; sequence GEEEQGEGDQ. S901, S923, K941, and T975 each carry phosphoserine. Positions 1080 to 1100 are disordered; that stretch reads GVQGGHQADGPDHDSDRGCGF. 2 coiled-coil regions span residues 1143–1201 and 1238–1278; these read KALL…ELGS and EKNW…KENS. The tract at residues 1265–1382 is necessary for interaction with MARK2 and apicobasal microtubule bundle formation in polarized epithelial cells; sequence EFLWRIEQLQ…EENHKGNLQR (118 aa). S1278 carries the phosphoserine modification. The tract at residues 1346 to 1384 is disordered; it reads ALSLDDEPEEPPAHRPEREFRNRLPEEEENHKGNLQRAV. Residues 1356-1377 show a composition bias toward basic and acidic residues; sequence PPAHRPEREFRNRLPEEEENHK. Phosphoserine occurs at positions 1385, 1388, and 1399. Position 1417 is a phosphothreonine (T1417). Residue S1421 is modified to Phosphoserine. At Y1427 the chain carries Phosphotyrosine. Residues 1485 to 1505 are disordered; it reads DTMTSPEHCQKQPLRSHVLTE. A phosphoserine mark is found at S1514, S1523, S1561, S1578, S1583, S1592, and S1661. Residues 1524 to 1569 form a disordered region; that stretch reads ITAAGGEGPFPTSRARGSPGDTKGGPPEPMLSRWPCTSPRHSRDYV. Disordered stretches follow at residues 1655 to 1689, 1707 to 1756, 1782 to 1842, and 1863 to 1905; these read GSGV…SRQV, PKYG…PVHT, GLRA…APPG, and KEER…PWGL. Residues T1667 and T1675 each carry the phosphothreonine modification. The span at 1678–1687 shows a compositional bias: low complexity; sequence SSPSRSLRSR. Residues 1678-1773 form a necessary for colocalization and binding with microtubules region; it reads SSPSRSLRSR…SLFNIIDHSP (96 aa). S1679 and S1683 each carry phosphoserine. The span at 1744-1756 shows a compositional bias: polar residues; sequence ARSTTTRESPVHT. 4 positions are modified to phosphoserine: S1791, S1808, S1812, and S1814.

The protein belongs to the SOGA family. Homodimer. Associates (via N- and C-terminus domains) with microtubule filaments. As to quaternary structure, interacts with MARK2; the interaction is direct. In terms of processing, phosphorylated during mitosis in a CDK1-dependent manner.

The protein localises to the lateral cell membrane. It is found in the apical cell membrane. It localises to the cytoplasm. Its subcellular location is the cytoskeleton. The protein resides in the spindle pole. The protein localises to the midbody. Functionally, microtubule-associated factor involved in the late phase of epithelial polarization and microtubule dynamics regulation. Plays a role in the development and maintenance of non-centrosomal microtubule bundles at the lateral membrane in polarized epithelial cells. Required for faithful chromosome segregation during mitosis. The protein is Microtubule cross-linking factor 1 (MTCL1) of Homo sapiens (Human).